Consider the following 634-residue polypeptide: Glutamyl-tRNA(Gln) amidotransferase subunit E (634 aa).

The protein belongs to the GatB/GatE family. GatE subfamily. Heterodimer of GatD and GatE.

It carries out the reaction L-glutamyl-tRNA(Gln) + L-glutamine + ATP + H2O = L-glutaminyl-tRNA(Gln) + L-glutamate + ADP + phosphate + H(+). Its function is as follows. Allows the formation of correctly charged Gln-tRNA(Gln) through the transamidation of misacylated Glu-tRNA(Gln) in organisms which lack glutaminyl-tRNA synthetase. The reaction takes place in the presence of glutamine and ATP through an activated gamma-phospho-Glu-tRNA(Gln). The GatDE system is specific for glutamate and does not act on aspartate. The chain is Glutamyl-tRNA(Gln) amidotransferase subunit E from Sulfolobus acidocaldarius (strain ATCC 33909 / DSM 639 / JCM 8929 / NBRC 15157 / NCIMB 11770).